The primary structure comprises 315 residues: Large ribosomal subunit protein uL29m (315 aa).

This sequence belongs to the universal ribosomal protein uL29 family. As to quaternary structure, component of the mitochondrial large ribosomal subunit. Mature mitochondrial ribosomes consist of a small (37S) and a large (54S) subunit. The 37S subunit contains at least 33 different proteins and 1 molecule of RNA (15S). The 54S subunit contains at least 45 different proteins and 1 molecule of RNA (21S).

Its subcellular location is the mitochondrion. In Candida glabrata (strain ATCC 2001 / BCRC 20586 / JCM 3761 / NBRC 0622 / NRRL Y-65 / CBS 138) (Yeast), this protein is Large ribosomal subunit protein uL29m (MRPL4).